The sequence spans 359 residues: Gene 58 protein (359 aa).

The next 11 helical transmembrane spans lie at 12-32, 45-65, 75-95, 103-123, 132-152, 154-174, 220-240, 246-266, 271-289, 296-318, and 330-350; these read TMAA…CFLF, VDEL…FFCF, YLDL…ICLQ, YLPI…PVTF, YANA…YLLL, FGSV…IAGL, LCVV…AGVY, VLKT…GMGY, ATFV…VFVL, SVLF…TIML, and IVLS…NVLY.

It belongs to the herpesviridae BMRF2 family.

It is found in the host membrane. This chain is Gene 58 protein (58), found in Equine herpesvirus 2 (strain 86/87) (EHV-2).